The chain runs to 463 residues: A-type ATP synthase subunit B (463 aa).

Belongs to the ATPase alpha/beta chains family. Has multiple subunits with at least A(3), B(3), C, D, E, F, H, I and proteolipid K(x).

Its subcellular location is the cell membrane. Component of the A-type ATP synthase that produces ATP from ADP in the presence of a proton gradient across the membrane. The B chain is a regulatory subunit. The chain is A-type ATP synthase subunit B from Desulfurococcus sp. (strain SY).